A 232-amino-acid chain; its full sequence is Clarin-2 (232 aa).

4 consecutive transmembrane segments (helical) span residues 8–28 (VWYGLASLLSFSSFLLIIVAL), 101–121 (ILLLLFLALALALVSMGFAIL), 139–159 (LWNVLAGGVVALAIGSFMAAV), and 188–208 (SFWICVASASAHAANLVVVAI).

Belongs to the clarin family. In terms of tissue distribution, detected in inner ear, particularly in hair bundles of auditory hair cells and is enriched in apical stereocilia. Detected in eye, but not in brain or muscle.

Its subcellular location is the cell projection. The protein localises to the stereocilium membrane. Plays a key role to hearing function. Required for normal organization and maintenance of the stereocilia bundle and for mechano-electrical transduction. The protein is Clarin-2 of Mus musculus (Mouse).